The sequence spans 145 residues: Peptide methionine sulfoxide reductase MsrB (145 aa).

In terms of domain architecture, MsrB spans 6-129; sequence EEELKQTLTD…NAAALRFVPV (124 aa). Residue C118 is the Nucleophile of the active site.

Belongs to the MsrB Met sulfoxide reductase family.

The enzyme catalyses L-methionyl-[protein] + [thioredoxin]-disulfide + H2O = L-methionyl-(R)-S-oxide-[protein] + [thioredoxin]-dithiol. The sequence is that of Peptide methionine sulfoxide reductase MsrB from Enterococcus faecalis (strain ATCC 700802 / V583).